We begin with the raw amino-acid sequence, 434 residues long: Adenylosuccinate synthetase (434 aa).

GTP-binding positions include 12–18 and 40–42; these read GDEGKGK and GHT. Residue aspartate 13 is the Proton acceptor of the active site. Mg(2+) is bound by residues aspartate 13 and glycine 40. IMP-binding positions include 13-16, 38-41, threonine 129, arginine 143, glutamine 224, threonine 239, and arginine 303; these read DEGK and NAGH. The Proton donor role is filled by histidine 41. Residue 299–305 participates in substrate binding; that stretch reads AVTGRPR. Residues arginine 305, 331–333, and 413–415 each bind GTP; these read KLD and STG.

The protein belongs to the adenylosuccinate synthetase family. In terms of assembly, homodimer. Mg(2+) serves as cofactor.

The protein resides in the cytoplasm. The catalysed reaction is IMP + L-aspartate + GTP = N(6)-(1,2-dicarboxyethyl)-AMP + GDP + phosphate + 2 H(+). It functions in the pathway purine metabolism; AMP biosynthesis via de novo pathway; AMP from IMP: step 1/2. Functionally, plays an important role in the de novo pathway of purine nucleotide biosynthesis. Catalyzes the first committed step in the biosynthesis of AMP from IMP. The polypeptide is Adenylosuccinate synthetase (Solibacter usitatus (strain Ellin6076)).